Reading from the N-terminus, the 171-residue chain is Translationally-controlled tumor protein homolog (171 aa).

One can recognise a TCTP domain in the interval 1-171 (MKIWKDVFTG…FKHGLEEEKF (171 aa)).

Belongs to the TCTP family.

The protein resides in the cytoplasm. Functionally, involved in calcium binding and microtubule stabilization. The chain is Translationally-controlled tumor protein homolog from Anopheles gambiae (African malaria mosquito).